A 1180-amino-acid polypeptide reads, in one-letter code: RecBCD enzyme subunit RecB (1180 aa).

A UvrD-like helicase ATP-binding domain is found at 2-450; the sequence is SDVAETLDPL…YTLDTNWRSA (449 aa). Residues 2–853 form an ATPase, DNA-binding and helicase activity, interacts with RecC region; that stretch reads SDVAETLDPL…KGEPQDAAGL (852 aa). An ATP-binding site is contributed by 23–30; sequence ASAGTGKT. A DNA-binding region spans residues 252-254; it reads IDR. W447 is a binding site for ATP. Positions 480 to 746 constitute a UvrD-like helicase C-terminal domain; sequence SAGKNQALRF…QIVTIHKSKG (267 aa). 3 DNA-binding regions span residues 511 to 512, 560 to 561, and R761; these read VG and SR. Residues 900 to 1180 are nuclease activity, interacts with RecD and RecA; it reads NWRVTSYSGL…MFAGMTLEEA (281 aa). Positions 956, 1067, 1080, and 1081 each coordinate Mg(2+). Catalysis depends on D1080, which acts as the For nuclease activity.

This sequence belongs to the helicase family. UvrD subfamily. In terms of assembly, heterotrimer of RecB, RecC and RecD. All subunits contribute to DNA-binding. The C-terminus interacts with RecA. Interacts with YgbT (Cas1). (Microbial infection) Lambda virus GamS protein interacts with the enzyme without displacing any of the subunits. Requires Mg(2+) as cofactor.

The enzyme catalyses Exonucleolytic cleavage (in the presence of ATP) in either 5'- to 3'- or 3'- to 5'-direction to yield 5'-phosphooligonucleotides.. The catalysed reaction is Couples ATP hydrolysis with the unwinding of duplex DNA by translocating in the 3'-5' direction.. It catalyses the reaction ATP + H2O = ADP + phosphate + H(+). After reacting with DNA bearing a Chi site the holoenzyme is disassembled and loses exonuclease activity, DNA unwinding and Chi-directed DNA cleavage; RecB remains complexed with ssDNA, which may prevent holoenzyme reassembly. High levels of Mg(2+) (13 mM MgCl(2+)) or incubation with DNase allows holoenzyme reassembly, suggesting it is DNA bound to RecB that prevents reassembly. Its activity is regulated as follows. (Microbial infection) RecBCD is inhibited by the lambda virus gam protein (both GamL and GamS isoforms); in vitro a short preincubation prior to adding DNA results in maximal inhibition. A helicase/nuclease that prepares dsDNA breaks (DSB) for recombinational DNA repair. Binds to DSBs and unwinds DNA via a rapid (&gt;1 kb/second) and highly processive (&gt;30 kb) ATP-dependent bidirectional helicase. Unwinds dsDNA until it encounters a Chi (crossover hotspot instigator, 5'-GCTGGTGG-3') sequence from the 3' direction. Cuts ssDNA a few nucleotides 3' to Chi site, by nicking one strand or switching the strand degraded (depending on the reaction conditions). The properties and activities of the enzyme are changed at Chi. The Chi-altered holoenzyme produces a long 3'-ssDNA overhang which facilitates RecA-binding to the ssDNA for homologous DNA recombination and repair. Holoenzyme degrades any linearized DNA that is unable to undergo homologous recombination. In the holoenzyme this subunit contributes ATPase, 3'-5' helicase, exonuclease activity and loads RecA onto ssDNA. The RecBC complex requires the RecD subunit for nuclease activity, but can translocate along ssDNA in both directions. The RecBCD complex does not unwind G-quadruplex DNA. Probably interacts with a component of retron Ec48 which moniters RecBCD stability; when RecB is missing or impaired the retron is activated and becomes toxic. The chain is RecBCD enzyme subunit RecB from Escherichia coli (strain K12).